The primary structure comprises 339 residues: Glycerol-3-phosphate dehydrogenase [NAD(P)+] (339 aa).

NADPH contacts are provided by Ser-15, Tyr-16, His-36, and Lys-110. Lys-110, Gly-139, and Thr-141 together coordinate sn-glycerol 3-phosphate. Position 143 (Ala-143) interacts with NADPH. Sn-glycerol 3-phosphate-binding residues include Lys-195, Asp-248, Ser-258, Arg-259, and Asn-260. Lys-195 (proton acceptor) is an active-site residue. Residue Arg-259 coordinates NADPH. NADPH-binding residues include Val-283 and Glu-285.

The protein belongs to the NAD-dependent glycerol-3-phosphate dehydrogenase family.

It is found in the cytoplasm. It catalyses the reaction sn-glycerol 3-phosphate + NAD(+) = dihydroxyacetone phosphate + NADH + H(+). It carries out the reaction sn-glycerol 3-phosphate + NADP(+) = dihydroxyacetone phosphate + NADPH + H(+). The protein operates within membrane lipid metabolism; glycerophospholipid metabolism. In terms of biological role, catalyzes the reduction of the glycolytic intermediate dihydroxyacetone phosphate (DHAP) to sn-glycerol 3-phosphate (G3P), the key precursor for phospholipid synthesis. The chain is Glycerol-3-phosphate dehydrogenase [NAD(P)+] from Klebsiella pneumoniae (strain 342).